A 459-amino-acid chain; its full sequence is Glutamyl-tRNA reductase (459 aa).

Substrate-binding positions include 49–52 (TCNR), Ser-109, 114–116 (EQQ), and Gln-120. Residue Cys-50 is the Nucleophile of the active site. Position 189 to 194 (189 to 194 (GAGAMG)) interacts with NADP(+).

It belongs to the glutamyl-tRNA reductase family. As to quaternary structure, homodimer.

It catalyses the reaction (S)-4-amino-5-oxopentanoate + tRNA(Glu) + NADP(+) = L-glutamyl-tRNA(Glu) + NADPH + H(+). It participates in porphyrin-containing compound metabolism; protoporphyrin-IX biosynthesis; 5-aminolevulinate from L-glutamyl-tRNA(Glu): step 1/2. Functionally, catalyzes the NADPH-dependent reduction of glutamyl-tRNA(Glu) to glutamate 1-semialdehyde (GSA). In Mycolicibacterium paratuberculosis (strain ATCC BAA-968 / K-10) (Mycobacterium paratuberculosis), this protein is Glutamyl-tRNA reductase.